Reading from the N-terminus, the 184-residue chain is 3-hydroxydecanoyl-[acyl-carrier-protein] dehydratase (184 aa).

His77 is an active-site residue.

It belongs to the thioester dehydratase family. FabA subfamily. In terms of assembly, homodimer.

It is found in the cytoplasm. It carries out the reaction a (3R)-hydroxyacyl-[ACP] = a (2E)-enoyl-[ACP] + H2O. The catalysed reaction is (3R)-hydroxydecanoyl-[ACP] = (2E)-decenoyl-[ACP] + H2O. The enzyme catalyses (2E)-decenoyl-[ACP] = (3Z)-decenoyl-[ACP]. Its pathway is lipid metabolism; fatty acid biosynthesis. In terms of biological role, necessary for the introduction of cis unsaturation into fatty acids. Catalyzes the dehydration of (3R)-3-hydroxydecanoyl-ACP to E-(2)-decenoyl-ACP and then its isomerization to Z-(3)-decenoyl-ACP. Can catalyze the dehydratase reaction for beta-hydroxyacyl-ACPs with saturated chain lengths up to 16:0, being most active on intermediate chain length. The sequence is that of 3-hydroxydecanoyl-[acyl-carrier-protein] dehydratase from Hyphomonas neptunium (strain ATCC 15444).